A 350-amino-acid chain; its full sequence is MSLLPYALARPFLFGLDPETAHELTMASLARTQGTLLSAAYCSSKVSDPIELAGLKFSNRVGLAAGLDKNARCIDGLAAMGFGFVEVGTVTPKAQPGNPKPRMFRLPEANALINRLGFNNDGLDAFLANVRKSAVRQKNAKNALLLGLNIGKNAATPIENAVDDYLICLDGVYPHADYVTVNISSPNTKNLRALQSDEALDALLGRIAERRETLAGRHGKRVPIFVKIAPDLDDAQVAVIATTLKRHAMDGVVATNTTLSRDAVKGLRHAEEAGGLSGAPVLEASNRVIGQLRAALGKGFPIIGVGGVMSGLDAVSKIKAGADVVQIYTGLIYKGPALVAEAANSIKNSR.

Residues 65–69 (AGLDK) and T89 each bind FMN. Substrate is bound at residue K69. 114 to 118 (NRLGF) contacts substrate. 2 residues coordinate FMN: N149 and N182. Residue N182 coordinates substrate. The active-site Nucleophile is the S185. Residue N187 coordinates substrate. The FMN site is built by K227 and T255. 256–257 (NT) contributes to the substrate binding site. Residues G278, G307, and 328–329 (YT) contribute to the FMN site.

The protein belongs to the dihydroorotate dehydrogenase family. Type 2 subfamily. In terms of assembly, monomer. It depends on FMN as a cofactor.

The protein resides in the cell membrane. It carries out the reaction (S)-dihydroorotate + a quinone = orotate + a quinol. The protein operates within pyrimidine metabolism; UMP biosynthesis via de novo pathway; orotate from (S)-dihydroorotate (quinone route): step 1/1. Catalyzes the conversion of dihydroorotate to orotate with quinone as electron acceptor. The sequence is that of Dihydroorotate dehydrogenase (quinone) from Polaromonas naphthalenivorans (strain CJ2).